We begin with the raw amino-acid sequence, 795 residues long: Phenylalanine--tRNA ligase beta subunit (795 aa).

In terms of domain architecture, tRNA-binding spans 39-148; sequence AGSFHGVVVG…ADAPIGTDIR (110 aa). In terms of domain architecture, B5 spans 401-476; that stretch reads PKRATITLRR…RVYGYNNIPD (76 aa). Mg(2+) contacts are provided by aspartate 454, aspartate 460, glutamate 463, and glutamate 464. The region spanning 701 to 794 is the FDX-ACB domain; it reads SRFPANRRDI…LKERFQASLR (94 aa).

This sequence belongs to the phenylalanyl-tRNA synthetase beta subunit family. Type 1 subfamily. In terms of assembly, tetramer of two alpha and two beta subunits. The cofactor is Mg(2+).

The protein localises to the cytoplasm. It carries out the reaction tRNA(Phe) + L-phenylalanine + ATP = L-phenylalanyl-tRNA(Phe) + AMP + diphosphate + H(+). This is Phenylalanine--tRNA ligase beta subunit from Escherichia coli O157:H7.